Here is a 1099-residue protein sequence, read N- to C-terminus: ATP-dependent helicase/deoxyribonuclease subunit B (1099 aa).

4 residues coordinate [4Fe-4S] cluster: C766, C1056, C1059, and C1065.

Belongs to the helicase family. AddB/RexB type 2 subfamily. Heterodimer of AddA and RexB. It depends on Mg(2+) as a cofactor. The cofactor is [4Fe-4S] cluster.

In terms of biological role, the heterodimer acts as both an ATP-dependent DNA helicase and an ATP-dependent, dual-direction single-stranded exonuclease. Recognizes the chi site generating a DNA molecule suitable for the initiation of homologous recombination. This subunit has 5' -&gt; 3' nuclease activity but not helicase activity. This is ATP-dependent helicase/deoxyribonuclease subunit B from Lactococcus lactis subsp. lactis (strain IL1403) (Streptococcus lactis).